The chain runs to 307 residues: MPKISVIGAGNVGATLAQRLIEKDFADVVMLDVVEGIPQGKALDISQSASVLGFRHAITGSNDYAETAGSEIVVITAGIARKPGMTREELLAINQKIMTDVVSNCLKYSPEATLVVVSNPVDTMTYLAWKLSGLPRKRVVGLSGVLDGGRLATFVARELGVNPSAVSPCVMGEHGGSMVVMPRFTLVNGKPLSELVSPEKADELAKRAVNGGAEIVAFLKTGSAFYAPSASVAAMVEAIFLGSGKVMNCAAVLDGEYGLRNIVLGVPVKLGKGGIKEIITLPLDGQENARLQVSAEMVKAQIASLSL.

Residues 8–13 and D32 each bind NAD(+); that span reads GAGNVG. Substrate contacts are provided by R81 and R87. Residues N94 and 117 to 119 each bind NAD(+); that span reads VSN. Residues N119 and R150 each contribute to the substrate site. Catalysis depends on H174, which acts as the Proton acceptor.

It belongs to the LDH/MDH superfamily. MDH type 3 family.

The catalysed reaction is (S)-malate + NAD(+) = oxaloacetate + NADH + H(+). Functionally, catalyzes the reversible oxidation of malate to oxaloacetate. In Dehalococcoides mccartyi (strain ATCC BAA-2100 / JCM 16839 / KCTC 5957 / BAV1), this protein is Malate dehydrogenase.